Here is a 748-residue protein sequence, read N- to C-terminus: Protein REPRESSOR OF SILENCING 3 (748 aa).

In terms of domain architecture, RRM spans 10–86 (VRLHVGGLGE…GRLRLEKAKE (77 aa)). Disordered regions lie at residues 244–318 (KSIL…QSID), 350–531 (GSSK…VSDT), 579–600 (VDEEEAGKGPLKASNKSTGGSS), and 729–748 (EWAKAKKALSEPRRKKNSEE). Residues 266–288 (THPSKNRQTISLEETGRQESSQA) are compositionally biased toward polar residues. The span at 294-314 (KPSEVVPDKSSDEPSRTKDLE) shows a compositional bias: basic and acidic residues. Positions 373–382 (LKKKTKRKRV) are enriched in basic residues. Acidic residues-rich tracts occupy residues 403 to 416 (DTMADDIERDDSDA), 439 to 472 (DDSDAVEDDTAIDSMADDPASDSVAESDDGDAVE), and 491 to 518 (ESDDGDNVEDDTAIDSMCDDTANDDVGS). The span at 520–531 (DSGSLADTVSDT) shows a compositional bias: polar residues.

In terms of tissue distribution, ubiquitously expressed.

The protein resides in the nucleus. The protein localises to the nucleolus. It is found in the nucleoplasm. Functionally, RNA-binding protein required for DNA demethylation and to eluviate siRNA-mediated transcriptional gene silencing (TGS), probably by guiding ROS1. Can bind specifically single stranded G-rich RNAs of 21-, 24- or 26-nt corresponding to promoter sequence of target genes; this interaction directs demethylation of target sequences. This chain is Protein REPRESSOR OF SILENCING 3, found in Arabidopsis thaliana (Mouse-ear cress).